The following is a 414-amino-acid chain: Serine/threonine transporter SstT (414 aa).

The next 8 membrane-spanning stretches (helical) occupy residues 22–42, 54–74, 89–109, 148–168, 189–209, 223–243, 305–325, and 337–357; these read GLVL…TIGF, IFVK…VMAA, IIVL…IAGF, AIFK…GLAL, IVHV…AETL, LLAV…PILV, MAGA…TLGL, and IVAA…LLLI.

Belongs to the dicarboxylate/amino acid:cation symporter (DAACS) (TC 2.A.23) family.

The protein resides in the cell inner membrane. It catalyses the reaction L-serine(in) + Na(+)(in) = L-serine(out) + Na(+)(out). It carries out the reaction L-threonine(in) + Na(+)(in) = L-threonine(out) + Na(+)(out). In terms of biological role, involved in the import of serine and threonine into the cell, with the concomitant import of sodium (symport system). In Haemophilus influenzae (strain PittEE), this protein is Serine/threonine transporter SstT.